We begin with the raw amino-acid sequence, 317 residues long: MNGHLPVMLGEVCQLIEPVLGIGDVFIDATLGAGGHSEAILMSSQGALLYGIDRDAYALALARKRLSGFADRCKFVHDTFDKFDKYLSNLHPKVFLFDLGMSSMQIDNPDRGFSYMKSGPLDMRMNESDKITAKEILNGYSETALIRIFRDYGQERYAKRIARQICKARSVSELVTTCQVSQLIRDVCPPHIRKGHPAKRVFQALRIEVNSELLFLRTALEKALDLLQVGGRIVVLSYHSLEDRIVKHLFRSVSVSQLPKGFYINKDPEYKLIGKDLKNPKETEIANNPRASSAHLRAVERVHSHSQAEAQIVEPRA.

S-adenosyl-L-methionine is bound by residues 34–36 (GGH), Asp53, Phe80, Asp98, and Gln105.

Belongs to the methyltransferase superfamily. RsmH family.

The protein resides in the cytoplasm. It catalyses the reaction cytidine(1402) in 16S rRNA + S-adenosyl-L-methionine = N(4)-methylcytidine(1402) in 16S rRNA + S-adenosyl-L-homocysteine + H(+). Specifically methylates the N4 position of cytidine in position 1402 (C1402) of 16S rRNA. The sequence is that of Ribosomal RNA small subunit methyltransferase H from Tropheryma whipplei (strain TW08/27) (Whipple's bacillus).